The following is a 334-amino-acid chain: Trans-3-hydroxy-L-proline dehydratase (334 aa).

Cys91 acts as the Proton acceptor in catalysis. Substrate is bound by residues 92–93 (GH), Asp250, and 255–256 (GT).

The protein belongs to the proline racemase family.

It catalyses the reaction trans-3-hydroxy-L-proline = 1-pyrroline-2-carboxylate + H2O. Catalyzes the dehydration of trans-3-hydroxy-L-proline (t3LHyp) to Delta(1)-pyrroline-2-carboxylate (Pyr2C). Is likely involved in a degradation pathway that converts t3LHyp to L-proline, which allows B.cereus to grow on t3LHyp as a sole carbon source. Displays no proline racemase activity. The protein is Trans-3-hydroxy-L-proline dehydratase of Bacillus cereus (strain ATCC 14579 / DSM 31 / CCUG 7414 / JCM 2152 / NBRC 15305 / NCIMB 9373 / NCTC 2599 / NRRL B-3711).